The sequence spans 236 residues: 2-C-methyl-D-erythritol 4-phosphate cytidylyltransferase (236 aa).

It belongs to the IspD/TarI cytidylyltransferase family. IspD subfamily. As to quaternary structure, homodimer.

The catalysed reaction is 2-C-methyl-D-erythritol 4-phosphate + CTP + H(+) = 4-CDP-2-C-methyl-D-erythritol + diphosphate. It functions in the pathway isoprenoid biosynthesis; isopentenyl diphosphate biosynthesis via DXP pathway; isopentenyl diphosphate from 1-deoxy-D-xylulose 5-phosphate: step 2/6. Functionally, catalyzes the formation of 4-diphosphocytidyl-2-C-methyl-D-erythritol from CTP and 2-C-methyl-D-erythritol 4-phosphate (MEP). The protein is 2-C-methyl-D-erythritol 4-phosphate cytidylyltransferase of Escherichia coli O157:H7.